The following is a 309-amino-acid chain: p-hydroxybenzoic acid efflux pump subunit AaeA (309 aa).

The helical transmembrane segment at 12-32 threads the bilayer; it reads AITVVLVILAFIAIFNAWVYY.

The protein belongs to the membrane fusion protein (MFP) (TC 8.A.1) family.

It is found in the cell inner membrane. Forms an efflux pump with AaeB. This is p-hydroxybenzoic acid efflux pump subunit AaeA from Escherichia coli O157:H7.